The chain runs to 210 residues: ATP phosphoribosyltransferase (210 aa).

This sequence belongs to the ATP phosphoribosyltransferase family. Short subfamily. Heteromultimer composed of HisG and HisZ subunits.

The protein resides in the cytoplasm. The enzyme catalyses 1-(5-phospho-beta-D-ribosyl)-ATP + diphosphate = 5-phospho-alpha-D-ribose 1-diphosphate + ATP. It functions in the pathway amino-acid biosynthesis; L-histidine biosynthesis; L-histidine from 5-phospho-alpha-D-ribose 1-diphosphate: step 1/9. Its function is as follows. Catalyzes the condensation of ATP and 5-phosphoribose 1-diphosphate to form N'-(5'-phosphoribosyl)-ATP (PR-ATP). Has a crucial role in the pathway because the rate of histidine biosynthesis seems to be controlled primarily by regulation of HisG enzymatic activity. The sequence is that of ATP phosphoribosyltransferase from Picosynechococcus sp. (strain ATCC 27264 / PCC 7002 / PR-6) (Agmenellum quadruplicatum).